The chain runs to 458 residues: tRNA modification GTPase MnmE (458 aa).

The (6S)-5-formyl-5,6,7,8-tetrahydrofolate site is built by Arg-22, Glu-84, and Arg-123. In terms of domain architecture, TrmE-type G spans 220–379 (GIATAIIGRP…LEKAIADLFF (160 aa)). K(+) is bound at residue Asn-230. Residues 230–235 (NVGKSS), 249–255 (TDIAGTT), and 274–277 (DTAG) contribute to the GTP site. Residue Ser-234 participates in Mg(2+) binding. K(+)-binding residues include Thr-249, Ile-251, and Thr-254. A Mg(2+)-binding site is contributed by Thr-255. Lys-458 contacts (6S)-5-formyl-5,6,7,8-tetrahydrofolate.

The protein belongs to the TRAFAC class TrmE-Era-EngA-EngB-Septin-like GTPase superfamily. TrmE GTPase family. Homodimer. Heterotetramer of two MnmE and two MnmG subunits. It depends on K(+) as a cofactor.

The protein resides in the cytoplasm. In terms of biological role, exhibits a very high intrinsic GTPase hydrolysis rate. Involved in the addition of a carboxymethylaminomethyl (cmnm) group at the wobble position (U34) of certain tRNAs, forming tRNA-cmnm(5)s(2)U34. The sequence is that of tRNA modification GTPase MnmE from Bacillus cereus (strain ZK / E33L).